A 122-amino-acid polypeptide reads, in one-letter code: MSTDSNTMFLKIEFGGGLELLFSNQRSHRITIPSTVPADNNTSVTTKDAASPATRPADVTYLLHHLRDHLLKEREELFMENGTVRPGILVLINDTDWELEGEGEYLLKDGDEIVLISTLHGG.

Polar residues predominate over residues 33–48 (PSTVPADNNTSVTTKD). The disordered stretch occupies residues 33 to 52 (PSTVPADNNTSVTTKDAASP). Position 122 is a 1-thioglycine (Gly-122). Gly-122 participates in a covalent cross-link: Glycyl lysine isopeptide (Gly-Lys) (interchain with K-? in acceptor proteins).

Belongs to the URM1 family. C-terminal thiocarboxylation occurs in 2 steps, it is first acyl-adenylated (-COAMP) via the hesA/moeB/thiF part of UBA4, then thiocarboxylated (-COSH) via the rhodanese domain of UBA4.

The protein resides in the cytoplasm. Its pathway is tRNA modification; 5-methoxycarbonylmethyl-2-thiouridine-tRNA biosynthesis. In terms of biological role, acts as a sulfur carrier required for 2-thiolation of mcm(5)S(2)U at tRNA wobble positions of cytosolic tRNA(Lys), tRNA(Glu) and tRNA(Gln). Serves as sulfur donor in tRNA 2-thiolation reaction by being thiocarboxylated (-COSH) at its C-terminus by the MOCS3 homolog UBA4. The sulfur is then transferred to tRNA to form 2-thiolation of mcm(5)S(2)U. Prior mcm(5) tRNA modification by the elongator complex is required for 2-thiolation. Also acts as a ubiquitin-like protein (UBL) that is covalently conjugated via an isopeptide bond to lysine residues of target proteins such as AHP1. The thiocarboxylated form serves as substrate for conjugation and oxidative stress specifically induces the formation of UBL-protein conjugates. The polypeptide is Ubiquitin-related modifier 1 (Laccaria bicolor (strain S238N-H82 / ATCC MYA-4686) (Bicoloured deceiver)).